The chain runs to 148 residues: Large ribosomal subunit protein uL15 (148 aa).

Residues glycine 18–leucine 38 form a disordered region.

The protein belongs to the universal ribosomal protein uL15 family.

The protein is Large ribosomal subunit protein uL15 (rpl27a) of Dictyostelium discoideum (Social amoeba).